The chain runs to 239 residues: Leucyl/phenylalanyl-tRNA--protein transferase (239 aa).

It belongs to the L/F-transferase family.

Its subcellular location is the cytoplasm. The enzyme catalyses N-terminal L-lysyl-[protein] + L-leucyl-tRNA(Leu) = N-terminal L-leucyl-L-lysyl-[protein] + tRNA(Leu) + H(+). It carries out the reaction N-terminal L-arginyl-[protein] + L-leucyl-tRNA(Leu) = N-terminal L-leucyl-L-arginyl-[protein] + tRNA(Leu) + H(+). The catalysed reaction is L-phenylalanyl-tRNA(Phe) + an N-terminal L-alpha-aminoacyl-[protein] = an N-terminal L-phenylalanyl-L-alpha-aminoacyl-[protein] + tRNA(Phe). Functions in the N-end rule pathway of protein degradation where it conjugates Leu, Phe and, less efficiently, Met from aminoacyl-tRNAs to the N-termini of proteins containing an N-terminal arginine or lysine. This chain is Leucyl/phenylalanyl-tRNA--protein transferase, found in Aliivibrio fischeri (strain ATCC 700601 / ES114) (Vibrio fischeri).